The sequence spans 172 residues: Adenine phosphoribosyltransferase (172 aa).

The protein belongs to the purine/pyrimidine phosphoribosyltransferase family. In terms of assembly, homodimer.

The protein resides in the cytoplasm. It catalyses the reaction AMP + diphosphate = 5-phospho-alpha-D-ribose 1-diphosphate + adenine. Its pathway is purine metabolism; AMP biosynthesis via salvage pathway; AMP from adenine: step 1/1. Catalyzes a salvage reaction resulting in the formation of AMP, that is energically less costly than de novo synthesis. The protein is Adenine phosphoribosyltransferase of Synechococcus sp. (strain CC9605).